Here is a 393-residue protein sequence, read N- to C-terminus: Formate-dependent phosphoribosylglycinamide formyltransferase (393 aa).

Residues 22–23 and Glu82 each bind N(1)-(5-phospho-beta-D-ribosyl)glycinamide; that span reads EL. ATP-binding positions include Arg114, Lys155, 160-165, 195-198, and Glu203; these read SSGKGQ and EGLV. The 190-residue stretch at 119-308 folds into the ATP-grasp domain; sequence LLAAETLQLP…EFALHVRAFL (190 aa). Residues Glu267 and Glu279 each contribute to the Mg(2+) site. Residues Asp286, Lys355, and 362 to 363 each bind N(1)-(5-phospho-beta-D-ribosyl)glycinamide; that span reads RR.

It belongs to the PurK/PurT family. In terms of assembly, homodimer.

The catalysed reaction is N(1)-(5-phospho-beta-D-ribosyl)glycinamide + formate + ATP = N(2)-formyl-N(1)-(5-phospho-beta-D-ribosyl)glycinamide + ADP + phosphate + H(+). It functions in the pathway purine metabolism; IMP biosynthesis via de novo pathway; N(2)-formyl-N(1)-(5-phospho-D-ribosyl)glycinamide from N(1)-(5-phospho-D-ribosyl)glycinamide (formate route): step 1/1. Its function is as follows. Involved in the de novo purine biosynthesis. Catalyzes the transfer of formate to 5-phospho-ribosyl-glycinamide (GAR), producing 5-phospho-ribosyl-N-formylglycinamide (FGAR). Formate is provided by PurU via hydrolysis of 10-formyl-tetrahydrofolate. This is Formate-dependent phosphoribosylglycinamide formyltransferase from Yersinia enterocolitica serotype O:8 / biotype 1B (strain NCTC 13174 / 8081).